The chain runs to 531 residues: Acetate CoA-transferase YdiF (531 aa).

The active-site 5-glutamyl coenzyme A thioester intermediate is Glu333.

The protein belongs to the 3-oxoacid CoA-transferase family. As to quaternary structure, homotetramer; dimer of dimers.

It carries out the reaction an acyl-CoA + acetate = a carboxylate + acetyl-CoA. Functionally, coA transferase having broad substrate specificity for short-chain acyl-CoA thioesters with the activity decreasing when the length of the carboxylic acid chain exceeds four carbons. May play a role in short-chain fatty acid metabolism in E.coli. This chain is Acetate CoA-transferase YdiF (ydiF), found in Escherichia coli (strain K12).